The primary structure comprises 152 residues: 1,4-dihydroxy-2-naphthoyl-CoA hydrolase (152 aa).

Asp-20 is an active-site residue.

The protein belongs to the 4-hydroxybenzoyl-CoA thioesterase family. DHNA-CoA hydrolase subfamily.

The catalysed reaction is 1,4-dihydroxy-2-naphthoyl-CoA + H2O = 1,4-dihydroxy-2-naphthoate + CoA + H(+). It functions in the pathway cofactor biosynthesis; phylloquinone biosynthesis. Its pathway is quinol/quinone metabolism; 1,4-dihydroxy-2-naphthoate biosynthesis; 1,4-dihydroxy-2-naphthoate from chorismate: step 7/7. Functionally, catalyzes the hydrolysis of 1,4-dihydroxy-2-naphthoyl-CoA (DHNA-CoA) to 1,4-dihydroxy-2-naphthoate (DHNA), a reaction involved in phylloquinone (vitamin K1) biosynthesis. The protein is 1,4-dihydroxy-2-naphthoyl-CoA hydrolase of Synechococcus sp. (strain CC9311).